Here is a 172-residue protein sequence, read N- to C-terminus: Large ribosomal subunit protein uL10 (172 aa).

The protein belongs to the universal ribosomal protein uL10 family. As to quaternary structure, part of the ribosomal stalk of the 50S ribosomal subunit. The N-terminus interacts with L11 and the large rRNA to form the base of the stalk. The C-terminus forms an elongated spine to which L12 dimers bind in a sequential fashion forming a multimeric L10(L12)X complex.

Functionally, forms part of the ribosomal stalk, playing a central role in the interaction of the ribosome with GTP-bound translation factors. The chain is Large ribosomal subunit protein uL10 from Lawsonia intracellularis (strain PHE/MN1-00).